A 1001-amino-acid polypeptide reads, in one-letter code: Chloride channel protein clh-3 (1001 aa).

Topologically, residues 1–48 (MGIGTKILSKIEKNKTSDGLTIPLTPTTQKQSSSWCSFESIKTFFRTV) are cytoplasmic. 2 helical membrane passes run 49–85 (IRDWIFLALLGFIMASLSFGMDYAILNLQNGQMRLFD) and 91–117 (HFTLAYLVWVGYVVGLILLSAVCAHYI). The short motif at 123-127 (GSGIP) is the Selectivity filter part_1 element. A chloride-binding site is contributed by Ser124. The segment at residues 126 to 133 (IPEMKTIL) is an intramembrane region (helical). 2 helical membrane-spanning segments follow: residues 142–160 (LSVRTLLSKMIGLTLSLGS) and 167–185 (EGPFVHVASVVASQLTRLV). A Selectivity filter part_2 motif is present at residues 165 to 169 (GKEGP). 2 intramembrane regions (helical) span residues 202–214 (MLAAGCAVGVACT) and 218–226 (PIGGVLFSI). Helical transmembrane passes span 238-258 (YWRGFFAATCSATLFRILRMF), 285-313 (LPIFALIGLVCGLAGSIFVYLHRRTVLFL), 322-341 (IFQKYWLIYPIFIATFISSL), 405-425 (YSPFVTLSSFQVVYFFLAILA), and 433-456 (GIFMPVFVLGAAFGRLVGEGVFSL). Positions 433-437 (GIFMP) match the Selectivity filter part_3 motif. Chloride contacts are provided by Ile434 and Phe435. Positions 473 to 487 (GVYAVVGAAAFCGAV) form an intramembrane region, helical. An intramembrane region (note=Loop between two helices) is located at residues 488–489 (TH). Residues 490 to 501 (TVSVAVIVFELT) constitute an intramembrane region (helical). The segment at residues 502-506 (GQLCH) is an intramembrane region (note=Loop between two helices). Residues 507-524 (LLPVMIAVLIANAVASYL) form a helical membrane-spanning segment. Topologically, residues 525 to 1001 (QPSIYDSIIR…LPDDVHDEKF (477 aa)) are cytoplasmic. Chloride is bound at residue Tyr529. In terms of domain architecture, CBS 1 spans 560-619 (MISPLVYIAKDSTVGDIKRALETKTRIRAFPLVENMESLALVGSVSRSQLQRYVDSQIGT). The stretch at 625–657 (EATRRIKQRLEDEESERKRREESKSDDTEDSLE) forms a coiled coil. The span at 634–650 (LEDEESERKRREESKSD) shows a compositional bias: basic and acidic residues. The tract at residues 634–662 (LEDEESERKRREESKSDDTEDSLETTGAG) is disordered. Residues Ser742 and Ser747 each carry the phosphoserine; by gck-3 modification. Residues 788 to 845 (IDSTPFQLSEYTSLFKAHSLFSLLGLNRAYVTKKGQLIGVVALKELRLAIEYLQSGKV) enclose the CBS 2 domain.

This sequence belongs to the chloride channel (TC 2.A.49) family. Isoform a interacts (via RFLI motif) with gck-3 (via C-terminus). Phosphorylated by gck-3; phosphorylation at both Ser-742 and Ser-747 is required to inhibit channel activity. Dephosphorylated by gsp-1/2 during cell swelling and oocyte meiotic maturation, which results in channel activation. As to expression, expressed in excretory cell, 4 anterior epithelial cells of the intestine, hermaphrodite-specific neurons and enteric muscles. Expressed also in vulva and uterus. Isoform a is expressed in oocytes (at protein level).

The protein resides in the cell membrane. Functionally, voltage-gated chloride channel. Insensitive to depolarizing conditioning voltages, requires low voltages for activation, insensitive to chloride levels and has a mild sensitivity to low pH. Channel gating properties are conferred by the cytoplasmic C-terminus. Plays a role in egg laying by modulating hermaphrodite-specific neurons (HSN) excitability and the ovulatory contractions of gap-junction-coupled gonadal sheath cells. When active, may prevent tubular formation of the excretory canals. Activated during oocyte meiotic maturation and by membrane hyperpolarization and cell swelling. Inhibited by Zn(2+) and to a lesser extent by Cd(2+). Voltage-gated chloride channel. Sensitive to depolarizing conditioning voltages, requires stronger voltages for activation and activation is slower, is inhibited by low concentrations of chloride and is activated by low pH. Channel gating properties are conferred by the cytoplasmic C-terminus. The polypeptide is Chloride channel protein clh-3 (Caenorhabditis elegans).